Here is a 218-residue protein sequence, read N- to C-terminus: Dynein axonemal assembly factor 6 (218 aa).

Positions 66-103 are disordered; sequence MGPGNIGPPKAKESKAIPEPRSDESENIWNPEEVPEGA. The span at 75 to 89 shows a compositional bias: basic and acidic residues; that stretch reads KAKESKAIPEPRSDE.

This sequence belongs to the PIH1 family. Interacts with HSPA1A/B, HSP90AA1 and DNAI2. Interacts with DNAAF2 and DNAAF4. In terms of tissue distribution, specifically expressed in testis. Detected in pachytene spermatocytes from 5 weeks of age and in pachytene and diplotene spermatocytes of adult mice. Not detected in spermatids or mature sperm.

The protein resides in the cytoplasm. It is found in the golgi apparatus. The protein localises to the trans-Golgi network. Functionally, plays a role in cytoplasmic pre-assembly of axonemal dynein. This is Dynein axonemal assembly factor 6 from Mus musculus (Mouse).